A 294-amino-acid chain; its full sequence is Formamidopyrimidine-DNA glycosylase (294 aa).

Pro2 serves as the catalytic Schiff-base intermediate with DNA. Glu3 (proton donor) is an active-site residue. Lys58 functions as the Proton donor; for beta-elimination activity in the catalytic mechanism. DNA is bound by residues His105, Arg124, and Lys167. The FPG-type zinc-finger motif lies at 258 to 294 (QVYDREGEPCRTRGCKGTVKRFTQNGRSTFWCPSCQK). Arg284 (proton donor; for delta-elimination activity) is an active-site residue.

It belongs to the FPG family. Monomer. Zn(2+) is required as a cofactor.

It carries out the reaction Hydrolysis of DNA containing ring-opened 7-methylguanine residues, releasing 2,6-diamino-4-hydroxy-5-(N-methyl)formamidopyrimidine.. The enzyme catalyses 2'-deoxyribonucleotide-(2'-deoxyribose 5'-phosphate)-2'-deoxyribonucleotide-DNA = a 3'-end 2'-deoxyribonucleotide-(2,3-dehydro-2,3-deoxyribose 5'-phosphate)-DNA + a 5'-end 5'-phospho-2'-deoxyribonucleoside-DNA + H(+). Its function is as follows. Involved in base excision repair of DNA damaged by oxidation or by mutagenic agents. Acts as a DNA glycosylase that recognizes and removes damaged bases. Has a preference for oxidized purines, such as 7,8-dihydro-8-oxoguanine (8-oxoG). Has AP (apurinic/apyrimidinic) lyase activity and introduces nicks in the DNA strand. Cleaves the DNA backbone by beta-delta elimination to generate a single-strand break at the site of the removed base with both 3'- and 5'-phosphates. The protein is Formamidopyrimidine-DNA glycosylase of Afipia carboxidovorans (strain ATCC 49405 / DSM 1227 / KCTC 32145 / OM5) (Oligotropha carboxidovorans).